The chain runs to 439 residues: L-tryptophan decarboxylase (439 aa).

This sequence belongs to the phosphatidylserine decarboxylase family.

It catalyses the reaction L-tryptophan + H(+) = tryptamine + CO2. The protein operates within secondary metabolite biosynthesis. Its function is as follows. L-tryptophan decarboxylase; part of the gene cluster that mediates the biosynthesis of psilocybin, a psychotropic tryptamine-derived natural product. The first step in the pathway is the decarboxylation of L-tryptophan to tryptamine by the decarboxylase psiD. PsiD does not decarboxylate phenylalanine, tyrosine, or 5-hydroxy- L -tryptophan (5-HTP). 4-hydroxy-L-tryptophan is accepted as substrate by psiD as well. The cytochrome P450 monooxygenase psiH then converts tryptamine to 4-hydroxytryptamine. The kinase psiK catalyzes the 4-O-phosphorylation step by converting 4-hydroxytryptamine into norbaeocystin. The methyltransferase psiM then catalyzes iterative methyl transfer to the amino group of norbaeocystin to yield psilocybin via a monomethylated intermediate, baeocystin. 4-hydroxy-6-methyl-l-tryptophancan also be converted the decarboxylase PsiD, kinase PsiK, and methyltransferase PsiM into respectively 6-methyl-norbaeocystin, 6-methylbaeocystin, and 6-methylpsilocybin. The chain is L-tryptophan decarboxylase from Psilocybe cyanescens.